A 554-amino-acid chain; its full sequence is Suppressor of hairless homolog (554 aa).

Positions 1–31 are disordered; sequence MYHPHHLPAHGQVQSHQHREDAAATSSRDVN. 3 DNA-binding regions span residues 83-90, 218-227, and 291-323; these read KSYGNEKR, RLRSQTVSTR, and RKVDKQTAILDADDPVSQLHKCAFYLKDTERMY. Residues 381 to 471 enclose the IPT/TIG domain; it reads PNVHSLQLNG…YPTNLTFTFT (91 aa). Residues 489–554 form a disordered region; it reads GSKRPSASMP…NGANMLRTAS (66 aa). Residues 508-519 show a composition bias toward basic and acidic residues; that stretch reads DSGRGNESDRGD.

This sequence belongs to the Su(H) family. Interacts with activated Notch proteins.

It is found in the nucleus. Transcriptional regulator that plays a central role in Notch signaling, a signaling pathway involved in cell-cell communication that regulates a broad spectrum of cell-fate determinations. Acts as a transcriptional repressor when it is not associated with Notch proteins. When associated with some Notch protein, it acts as a transcriptional activator that activates transcription of Notch target genes. Required for the transcriptional expression of Brachyury, suggesting that it participates in notochord differentiation. This chain is Suppressor of hairless homolog (Su(H)), found in Ciona intestinalis (Transparent sea squirt).